The following is a 125-amino-acid chain: Phosphoribosyl-AMP cyclohydrolase (125 aa).

D74 lines the Mg(2+) pocket. C75 is a Zn(2+) binding site. The Mg(2+) site is built by D76 and D78. Residues C92 and C99 each coordinate Zn(2+).

Belongs to the PRA-CH family. Homodimer. The cofactor is Mg(2+). Zn(2+) is required as a cofactor.

It localises to the cytoplasm. The catalysed reaction is 1-(5-phospho-beta-D-ribosyl)-5'-AMP + H2O = 1-(5-phospho-beta-D-ribosyl)-5-[(5-phospho-beta-D-ribosylamino)methylideneamino]imidazole-4-carboxamide. Its pathway is amino-acid biosynthesis; L-histidine biosynthesis; L-histidine from 5-phospho-alpha-D-ribose 1-diphosphate: step 3/9. In terms of biological role, catalyzes the hydrolysis of the adenine ring of phosphoribosyl-AMP. In Trichlorobacter lovleyi (strain ATCC BAA-1151 / DSM 17278 / SZ) (Geobacter lovleyi), this protein is Phosphoribosyl-AMP cyclohydrolase.